Here is a 175-residue protein sequence, read N- to C-terminus: ADP-ribosylation factor 6 (175 aa).

Residue glycine 2 is the site of N-myristoyl glycine attachment. Residues 20-27 (GLDAAGKT), 63-67 (DVGGQ), and 122-125 (NKQD) each bind GTP.

Belongs to the small GTPase superfamily. Arf family. Expressed in the head (at protein level).

Its subcellular location is the golgi apparatus. Activation is generally mediated by a guanine exchange factor (GEF), while inactivation through hydrolysis of bound GTP is catalyzed by a GTPase activating protein (GAP). May be activated by Efa6. GTP-binding protein involved in protein trafficking; may modulate vesicle budding and uncoating within the Golgi apparatus. Promotes cell movement and remodeling of the actin cytoskeleton during compound eye morphogenesis. Required for normal ethanol-induced tolerance and preference. Probably after Efa6-mediated activation, counteracts ethanol-induced sedation. The sequence is that of ADP-ribosylation factor 6 from Drosophila melanogaster (Fruit fly).